The chain runs to 119 residues: MIIGIGIDIIELNRIEKMLDGKLKFMERILTENERNVAMELKGSRLTEFVAGRFAAKEAYSKAVGTGIGKEVSFLDIEVKNDERGKPILITSTEYIVHLSISHSKEFAVAQVVLESLSR.

Mg(2+) is bound by residues Asp-8 and Glu-58.

It belongs to the P-Pant transferase superfamily. AcpS family. Requires Mg(2+) as cofactor.

The protein localises to the cytoplasm. The catalysed reaction is apo-[ACP] + CoA = holo-[ACP] + adenosine 3',5'-bisphosphate + H(+). Its function is as follows. Transfers the 4'-phosphopantetheine moiety from coenzyme A to a Ser of acyl-carrier-protein. The chain is Holo-[acyl-carrier-protein] synthase from Bacillus cereus (strain ATCC 14579 / DSM 31 / CCUG 7414 / JCM 2152 / NBRC 15305 / NCIMB 9373 / NCTC 2599 / NRRL B-3711).